Reading from the N-terminus, the 122-residue chain is Large ribosomal subunit protein uL14 (122 aa).

This sequence belongs to the universal ribosomal protein uL14 family. As to quaternary structure, part of the 50S ribosomal subunit. Forms a cluster with proteins L3 and L19. In the 70S ribosome, L14 and L19 interact and together make contacts with the 16S rRNA in bridges B5 and B8.

Binds to 23S rRNA. Forms part of two intersubunit bridges in the 70S ribosome. The polypeptide is Large ribosomal subunit protein uL14 (Bifidobacterium animalis subsp. lactis (strain AD011)).